We begin with the raw amino-acid sequence, 317 residues long: Methionyl-tRNA formyltransferase (317 aa).

Ser109–Pro112 provides a ligand contact to (6S)-5,6,7,8-tetrahydrofolate.

The protein belongs to the Fmt family.

The enzyme catalyses L-methionyl-tRNA(fMet) + (6R)-10-formyltetrahydrofolate = N-formyl-L-methionyl-tRNA(fMet) + (6S)-5,6,7,8-tetrahydrofolate + H(+). Functionally, attaches a formyl group to the free amino group of methionyl-tRNA(fMet). The formyl group appears to play a dual role in the initiator identity of N-formylmethionyl-tRNA by promoting its recognition by IF2 and preventing the misappropriation of this tRNA by the elongation apparatus. This is Methionyl-tRNA formyltransferase from Desulforamulus reducens (strain ATCC BAA-1160 / DSM 100696 / MI-1) (Desulfotomaculum reducens).